Reading from the N-terminus, the 203-residue chain is Small ribosomal subunit protein uS4 (203 aa).

In terms of domain architecture, S4 RNA-binding spans 93 to 154 (RRLDNVVFRA…KSRNMDAVTD (62 aa)).

The protein belongs to the universal ribosomal protein uS4 family. In terms of assembly, part of the 30S ribosomal subunit. Contacts protein S5. The interaction surface between S4 and S5 is involved in control of translational fidelity.

One of the primary rRNA binding proteins, it binds directly to 16S rRNA where it nucleates assembly of the body of the 30S subunit. Its function is as follows. With S5 and S12 plays an important role in translational accuracy. The protein is Small ribosomal subunit protein uS4 of Chlorobium luteolum (strain DSM 273 / BCRC 81028 / 2530) (Pelodictyon luteolum).